The primary structure comprises 497 residues: Trichoplein keratin filament-binding protein (497 aa).

Coiled-coil stretches lie at residues 67–140 (HCEK…LLYE), 166–271 (ATQK…ELGR), and 327–479 (MKQV…AKTM). The interval 72-457 (KEEKRKILEL…WEAARQEEEE (386 aa)) is interaction with keratin proteins. Positions 167-188 (TQKEEKKQQEATEKQENKRLEN) are disordered. A compositionally biased stretch (basic and acidic residues) spans 168–188 (QKEEKKQQEATEKQENKRLEN). The tract at residues 258–424 (RQMAALRRKT…KQLAQRAKEE (167 aa)) is trichohyalin/plectin homology domain. Residues 441–497 (AERQGQEWEAARQEEEEEEEARQAEEHSNALLQQEAKTMAEKGYQPKLHGHLRIAWD) form a disordered region. A compositionally biased stretch (basic and acidic residues) spans 444 to 453 (QGQEWEAARQ). Residues 488-497 (LHGHLRIAWD) are compositionally biased toward basic residues.

The protein belongs to the TCHP family. As to quaternary structure, interacts specifically with keratin proteins including, KRT5, KRT6A, KRT8, KRT14, KRT16 and KRT18. Interacts with KCTD17. In terms of processing, ubiquitinated. Ubiquitination by the BCR(KCTD17) E3 ubiquitin ligase complex results in proteasomal degradation, and induces ciliogenesis. Expressed in all tissues examined, including brain, liver, small intestine, large intestine, lung and heart. Found concentrated in tubular structures within hepatocytes, and in the apical cortical region and desmosomes of the apical junctional domain in enterocytes of the small intestine. In the hair follicle, localized at the outer root sheath. Also expressed in blood vessels (at protein level).

Its subcellular location is the cytoplasm. The protein resides in the cytoskeleton. It is found in the cell membrane. It localises to the mitochondrion. The protein localises to the microtubule organizing center. Its subcellular location is the centrosome. Its function is as follows. Tumor suppressor which has the ability to inhibit cell growth and be pro-apoptotic during cell stress. May act as a 'capping' or 'branching' protein for keratin filaments in the cell periphery. May regulate K8/K18 filament and desmosome organization mainly at the apical or peripheral regions of simple epithelial cells. Is a negative regulator of ciliogenesis. This is Trichoplein keratin filament-binding protein from Mus musculus (Mouse).